The following is a 159-amino-acid chain: Keratin-associated protein 6-2 (159 aa).

Residues 11 to 147 (GYGCGYGSGY…SYYRSGCCGY (137 aa)) are 66 X 2 AA repeats of G-[YCGS].

This sequence belongs to the KRTAP type 6 family. Interacts with hair keratins. In terms of tissue distribution, expressed in skin during two hair growth cycles. Expression restricted to the cortical cells of hair follicles, appearing first in the cortical cells processing the flat nuclei located a few cells above the dermal papilla.

In the hair cortex, hair keratin intermediate filaments are embedded in an interfilamentous matrix, consisting of hair keratin-associated proteins (KRTAP), which are essential for the formation of a rigid and resistant hair shaft through their extensive disulfide bond cross-linking with abundant cysteine residues of hair keratins. The matrix proteins include the high-sulfur and high-glycine-tyrosine keratins. This chain is Keratin-associated protein 6-2, found in Mus musculus (Mouse).